Here is a 467-residue protein sequence, read N- to C-terminus: L-seryl-tRNA(Sec) selenium transferase (467 aa).

N6-(pyridoxal phosphate)lysine is present on K298.

It belongs to the SelA family. Pyridoxal 5'-phosphate serves as cofactor.

The protein resides in the cytoplasm. It carries out the reaction L-seryl-tRNA(Sec) + selenophosphate + H(+) = L-selenocysteinyl-tRNA(Sec) + phosphate. It participates in aminoacyl-tRNA biosynthesis; selenocysteinyl-tRNA(Sec) biosynthesis; selenocysteinyl-tRNA(Sec) from L-seryl-tRNA(Sec) (bacterial route): step 1/1. Functionally, converts seryl-tRNA(Sec) to selenocysteinyl-tRNA(Sec) required for selenoprotein biosynthesis. The polypeptide is L-seryl-tRNA(Sec) selenium transferase (Alkaliphilus oremlandii (strain OhILAs) (Clostridium oremlandii (strain OhILAs))).